The chain runs to 250 residues: Large ribosomal subunit protein uL13c (250 aa).

A chloroplast-targeting transit peptide spans methionine 1–alanine 47.

As to quaternary structure, component of the chloroplast large ribosomal subunit (LSU). Mature 70S chloroplast ribosomes of higher plants consist of a small (30S) and a large (50S) subunit. The 30S small subunit contains 1 molecule of ribosomal RNA (16S rRNA) and 24 different proteins. The 50S large subunit contains 3 rRNA molecules (23S, 5S and 4.5S rRNA) and 33 different proteins.

It is found in the plastid. It localises to the chloroplast. Its function is as follows. Component of the chloroplast ribosome (chloro-ribosome), a dedicated translation machinery responsible for the synthesis of chloroplast genome-encoded proteins, including proteins of the transcription and translation machinery and components of the photosynthetic apparatus. The polypeptide is Large ribosomal subunit protein uL13c (RPL13) (Spinacia oleracea (Spinach)).